The primary structure comprises 417 residues: NADH-quinone oxidoreductase subunit D (417 aa).

Belongs to the complex I 49 kDa subunit family. NDH-1 is composed of 14 different subunits. Subunits NuoB, C, D, E, F, and G constitute the peripheral sector of the complex.

Its subcellular location is the cell inner membrane. It carries out the reaction a quinone + NADH + 5 H(+)(in) = a quinol + NAD(+) + 4 H(+)(out). NDH-1 shuttles electrons from NADH, via FMN and iron-sulfur (Fe-S) centers, to quinones in the respiratory chain. The immediate electron acceptor for the enzyme in this species is believed to be ubiquinone. Couples the redox reaction to proton translocation (for every two electrons transferred, four hydrogen ions are translocated across the cytoplasmic membrane), and thus conserves the redox energy in a proton gradient. In Azoarcus sp. (strain BH72), this protein is NADH-quinone oxidoreductase subunit D.